The following is a 250-amino-acid chain: Proteasome subunit alpha type-7-A (250 aa).

Residue Lys-62 forms a Glycyl lysine isopeptide (Lys-Gly) (interchain with G-Cter in ubiquitin) linkage.

It belongs to the peptidase T1A family. As to quaternary structure, component of the 20S core complex of the 26S proteasome. The 26S proteasome is composed of a core protease (CP), known as the 20S proteasome, capped at one or both ends by the 19S regulatory particle (RP/PA700). The 20S proteasome core is composed of 28 subunits that are arranged in four stacked rings, resulting in a barrel-shaped structure. The two end rings are each formed by seven alpha subunits, and the two central rings are each formed by seven beta subunits. The catalytic chamber with the active sites is on the inside of the barrel. Interacts with KIN10 and KIN11 SnRK subunits, and with the SKP1A/ASK1 subunit of the SCF E3 ubiquitin ligase complex. In terms of tissue distribution, expressed in roots, leaves and flowers.

The protein resides in the cytoplasm. The protein localises to the nucleus. The proteasome is a multicatalytic proteinase complex which is characterized by its ability to cleave peptides with Arg, Phe, Tyr, Leu, and Glu adjacent to the leaving group at neutral or slightly basic pH. The proteasome has an ATP-dependent proteolytic activity. Mediates the association of the SCF(TIR1) E3 ubiquitin ligase complex with the proteasome. This chain is Proteasome subunit alpha type-7-A (PAD1), found in Arabidopsis thaliana (Mouse-ear cress).